The chain runs to 523 residues: ATP synthase subunit alpha (523 aa).

Residue 179-186 (GDRQTGKT) participates in ATP binding.

It belongs to the ATPase alpha/beta chains family. As to quaternary structure, F-type ATPases have 2 components, CF(1) - the catalytic core - and CF(0) - the membrane proton channel. CF(1) has five subunits: alpha(3), beta(3), gamma(1), delta(1), epsilon(1). CF(0) has three main subunits: a(1), b(2) and c(9-12). The alpha and beta chains form an alternating ring which encloses part of the gamma chain. CF(1) is attached to CF(0) by a central stalk formed by the gamma and epsilon chains, while a peripheral stalk is formed by the delta and b chains.

The protein resides in the cell inner membrane. The catalysed reaction is ATP + H2O + 4 H(+)(in) = ADP + phosphate + 5 H(+)(out). Produces ATP from ADP in the presence of a proton gradient across the membrane. The alpha chain is a regulatory subunit. This is ATP synthase subunit alpha from Vibrio vulnificus (strain YJ016).